Consider the following 256-residue polypeptide: Zinc metalloprotease (256 aa).

The active-site Proton donor is histidine 74.

The protein belongs to the peptidase M4 family. Zn(2+) serves as cofactor.

The protein localises to the secreted. Its function is as follows. May play a role in ulcer formation. Proteolytic digestion of gastric mucus has been suggested as an important mechanism by which its pathogenicity is at least partly exerted. In Helicobacter pylori (Campylobacter pylori), this protein is Zinc metalloprotease (hap).